The primary structure comprises 472 residues: Glutamate--tRNA ligase (472 aa).

A 'HIGH' region motif is present at residues 7 to 17; the sequence is PSPTGFLHVGG. 4 residues coordinate Zn(2+): Cys-96, Cys-98, Cys-123, and His-125. Positions 112-129 are enriched in basic and acidic residues; it reads ARKEKPRYDGRCRHRSEP. The interval 112 to 134 is disordered; it reads ARKEKPRYDGRCRHRSEPPSDQP. Positions 234–238 match the 'KMSKS' region motif; it reads KLSKR. ATP is bound at residue Lys-237.

Belongs to the class-I aminoacyl-tRNA synthetase family. Glutamate--tRNA ligase type 1 subfamily. In terms of assembly, monomer. It depends on Zn(2+) as a cofactor.

The protein localises to the cytoplasm. It catalyses the reaction tRNA(Glu) + L-glutamate + ATP = L-glutamyl-tRNA(Glu) + AMP + diphosphate. Its function is as follows. Catalyzes the attachment of glutamate to tRNA(Glu) in a two-step reaction: glutamate is first activated by ATP to form Glu-AMP and then transferred to the acceptor end of tRNA(Glu). This chain is Glutamate--tRNA ligase, found in Magnetococcus marinus (strain ATCC BAA-1437 / JCM 17883 / MC-1).